The sequence spans 450 residues: Putative receptor-like protein kinase At1g72540 (450 aa).

Threonine 73 carries the phosphothreonine modification. The Protein kinase domain occupies 84–365 (FSKYNFLGEG…TVVKTLEPIL (282 aa)). Residues 90-98 (LGEGGFGEV) and lysine 119 contribute to the ATP site. A Phosphotyrosine modification is found at tyrosine 164. Aspartate 214 functions as the Proton acceptor in the catalytic mechanism. Position 218 is a phosphoserine (serine 218). Position 254 is a phosphothreonine (threonine 254). Tyrosine 262 is modified (phosphotyrosine).

It belongs to the protein kinase superfamily. Ser/Thr protein kinase family.

It carries out the reaction L-seryl-[protein] + ATP = O-phospho-L-seryl-[protein] + ADP + H(+). It catalyses the reaction L-threonyl-[protein] + ATP = O-phospho-L-threonyl-[protein] + ADP + H(+). This is Putative receptor-like protein kinase At1g72540 from Arabidopsis thaliana (Mouse-ear cress).